The primary structure comprises 615 residues: MALLQIAEPGQSAAPHQHKRAVGIDLGTTNSLVAAVRSGQADTLCDEQGRDLLPSVVHYQADTIRVGVDAKREAALDPHNTIVSAKRMMGKALADIDTRQQPYQFVAADNGMPQLQTRQGLVNPVQVSAEILKKLAERGAAALGGDLDGVVITVPAYFDDAQRQGTKDAARLAGLHVLRLLNEPTAAAIAYGLDSGQEGVIAVYDLGGGTFDISILRLHRGVFEVMATGGDSALGGDDFDHLLADWLKEQAGLTGELDARLQRELLDVAAAVKHGLTDADAVPCTFAGWQGSVTRSQFDELIQPLVKRTLLACRRALRDAGLEQEEVLEVVMVGGSTRVPLVRELVGEFFQRPPLTSIDPDKVVAIGAAIQADILVGNKPDAEMLLLDVIPLSLGLETMGGLAEKVIPRNTTIPVARAQEFTTFKDGQTAMAIHVVQGERELVADCRSLARFTLTGIPPMVAGAAHIRVTFQVDADGLLSVSAMEKSSGVQAEIQVKPSYGLGEDDILNMLSASIANAQQDMDARMLAEQQVEADRVVESLNAALAADGEALLSPAERAELDAAIAHLLTMRSTGTTNQIKEAIEAADAASGEFAARRMDASIRKVLTGQNVNKV.

This sequence belongs to the heat shock protein 70 family.

Chaperone involved in the maturation of iron-sulfur cluster-containing proteins. Has a low intrinsic ATPase activity which is markedly stimulated by HscB. This Aeromonas hydrophila subsp. hydrophila (strain ATCC 7966 / DSM 30187 / BCRC 13018 / CCUG 14551 / JCM 1027 / KCTC 2358 / NCIMB 9240 / NCTC 8049) protein is Chaperone protein HscA homolog.